We begin with the raw amino-acid sequence, 294 residues long: MASFRRFRLLSPLKPCVTFGRMLYTRIDKDGLTMLAGHLAYVSLLSLVPLITVIFALFAAFPMFAEISIKLKAFIFANFMPATGDIIQNYLEQFVANSNRMTVVGTCGLIVTALLLIYSVDSVLNIIWRSKIQRSLVFSFAVYWMVLTLGPILVGASMVISSYLLSLHWLAHARVDSMIDEILRVFPLLISWVSFWLLYSVVPTVRVPARDALIGALVAALLFELGKKGFAMYITLFPSYQLIYGVLAVIPILFLWVYWSWCIVLLGAEITVTLGEYRAERHHAKSVITQSPEM.

Helical transmembrane passes span 44–64 (LLSL…FPMF), 67–87 (ISIK…GDII), 108–128 (GLIV…NIIW), 136–156 (LVFS…LVGA), 185–205 (VFPL…VPTV), 212–232 (ALIG…GFAM), and 246–266 (VLAV…IVLL).

Belongs to the UPF0761 family.

Its subcellular location is the cell inner membrane. The chain is UPF0761 membrane protein YPTB0027 from Yersinia pseudotuberculosis serotype I (strain IP32953).